Here is a 276-residue protein sequence, read N- to C-terminus: MLDILSAIILGAVQGISEFLPISSSGHLVLVPALLGIETGLAFDTILHIGTLVAIFTFFWKDIINLIKGFILSIIDLTEGVDIFKRELHRVPEKRFAWLIIVGTIPTGIMGILLKDAIETIFRGTLFVGIFLLVTAAVLYYSERHSSGQITQKDMSFKQALIVGICQGLAVFPGISRSGSTIASGLCLGLNREYAARYSFLLSIPAVIGAGLIQIKDIATLDASASVLLAGFISSVIFGYLSIKLLMKMIKGWSLDIFAYYCTIIGIITIILSVVL.

7 consecutive transmembrane segments (helical) span residues 40-60 (GLAFDTILHIGTLVAIFTFFW), 98-118 (WLIIVGTIPTGIMGILLKDAI), 121-141 (IFRGTLFVGIFLLVTAAVLYY), 155-175 (MSFKQALIVGICQGLAVFPGI), 200-220 (FLLSIPAVIGAGLIQIKDIAT), 227-247 (VLLAGFISSVIFGYLSIKLLM), and 255-275 (LDIFAYYCTIIGIITIILSVV).

Belongs to the UppP family.

It is found in the cell membrane. It catalyses the reaction di-trans,octa-cis-undecaprenyl diphosphate + H2O = di-trans,octa-cis-undecaprenyl phosphate + phosphate + H(+). Functionally, catalyzes the dephosphorylation of undecaprenyl diphosphate (UPP). The polypeptide is Undecaprenyl-diphosphatase (Methanosphaera stadtmanae (strain ATCC 43021 / DSM 3091 / JCM 11832 / MCB-3)).